The sequence spans 145 residues: Deoxyuridine 5'-triphosphate nucleotidohydrolase (145 aa).

Substrate-binding positions include 62–64, asparagine 75, 79–81, and lysine 89; these read RSG and TVD.

It belongs to the dUTPase family. Mg(2+) serves as cofactor.

The catalysed reaction is dUTP + H2O = dUMP + diphosphate + H(+). It participates in pyrimidine metabolism; dUMP biosynthesis; dUMP from dCTP (dUTP route): step 2/2. Functionally, this enzyme is involved in nucleotide metabolism: it produces dUMP, the immediate precursor of thymidine nucleotides and it decreases the intracellular concentration of dUTP so that uracil cannot be incorporated into DNA. The chain is Deoxyuridine 5'-triphosphate nucleotidohydrolase from Helicobacter pylori (strain P12).